Here is a 539-residue protein sequence, read N- to C-terminus: MAKQIAFDEQARRALERGVNQLADAVKVTLGPRGRHVVLDKQFGGPQVTNDGVTIAREIELEDPYENLGAQLAKNVATKTNDVAGDGTTTATVLAQAMVREGLRNLAAGANPTALGRGIQAATDAVVDALKAKATPVKGRDNIAQIATVSSRDESIGALVGEAMERVGEDGVISIEESSTLATELEITEGVQFDKGFVSPYFVTDSERQEAVLEDAQILLHREKISSIQDLLPLLEKIAQSGKPLLILAEDVEGEALSTLVVNAIRKTFKVVAVKAPYFGDRRKAFLDDLAAVTGAQVIAPEVGLKLSEAGPEVLGSARRITVTKDTTTIVDGRGPQDDVKARAEQIRKEIEVSDSDWDREKLQERLAKLAGGVAVIKVGAATETELKERKSRIEDAVAASKAAAEEGSVPGGGSSLIHAAKELNGDLGLSGDEATGVRLVRTALEAPLFWIASNAGQEGAVVVSKVRDLDWGQGYNAATLTFGDLVQPGIVDPLKVTRSAVANAASIARMVLTTESAVVDKPEEEDSAAAGHGHGHSH.

ATP is bound by residues 29–32 (TLGP), 86–90 (DGTTT), G413, 477–479 (NAA), and D493. The tract at residues 519–539 (VVDKPEEEDSAAAGHGHGHSH) is disordered.

It belongs to the chaperonin (HSP60) family. In terms of assembly, forms a cylinder of 14 subunits composed of two heptameric rings stacked back-to-back. Interacts with the co-chaperonin GroES.

The protein localises to the cytoplasm. It catalyses the reaction ATP + H2O + a folded polypeptide = ADP + phosphate + an unfolded polypeptide.. In terms of biological role, together with its co-chaperonin GroES, plays an essential role in assisting protein folding. The GroEL-GroES system forms a nano-cage that allows encapsulation of the non-native substrate proteins and provides a physical environment optimized to promote and accelerate protein folding. In Saccharopolyspora erythraea (strain ATCC 11635 / DSM 40517 / JCM 4748 / NBRC 13426 / NCIMB 8594 / NRRL 2338), this protein is Chaperonin GroEL 2.